Reading from the N-terminus, the 1096-residue chain is Mediator of replication checkpoint protein 1 (1096 aa).

Positions E68–E85 are enriched in basic and acidic residues. The tract at residues E68–T90 is disordered. S144 carries the post-translational modification Phosphoserine. 3 disordered regions span residues A166 to Q200, I294 to P316, and D336 to N365. A compositionally biased stretch (polar residues) spans R181–Q200. The segment covering I294–K315 has biased composition (basic and acidic residues). Over residues D336 to I346 the composition is skewed to acidic residues. Residues S409, S411, and S434 each carry the phosphoserine modification. A coiled-coil region spans residues Q488–A542. The tract at residues E527–D620 is disordered. The span at S547–G560 shows a compositional bias: low complexity. The segment covering K591 to H600 has biased composition (basic residues). Residues S605 and S607 each carry the phosphoserine modification. T609 bears the Phosphothreonine mark. Over residues V611 to D620 the composition is skewed to basic and acidic residues. Residues D652 to T716 adopt a coiled-coil conformation. Residues E724–D743 are disordered. A phosphoserine mark is found at S801 and S807. Residues D881–Q898 are compositionally biased toward polar residues. Residues D881–Q903 form a disordered region. S911 carries the post-translational modification Phosphoserine. A disordered region spans residues R1058–N1096. The span at R1065 to S1083 shows a compositional bias: basic residues.

Interacts with CDC45 in S phase. Phosphorylated by MEC1 and RAD53.

It is found in the nucleus. Functionally, required for normal DNA replication. Phosphorylated in response to DNA replication stress. Phosphorylation allows it to mediate the activation of RAD53. The polypeptide is Mediator of replication checkpoint protein 1 (MRC1) (Saccharomyces cerevisiae (strain ATCC 204508 / S288c) (Baker's yeast)).